The primary structure comprises 365 residues: Coxsackievirus and adenovirus receptor (365 aa).

Positions 1–19 (MALLLCFVLLCGVVDFARS) are cleaved as a signal peptide. Ig-like C2-type domains lie at 20 to 134 (LSIT…KKIH) and 141 to 228 (PSGA…LRLN). At 20–237 (LSITTPEEMI…NVVPPSNKAG (218 aa)) the chain is on the extracellular side. Cystine bridges form between Cys41-Cys120 and Cys162-Cys212. N-linked (GlcNAc...) asparagine glycosylation is found at Asn106 and Asn201. Residues 238–258 (LIAGAIIGTLLALALIGLIIF) traverse the membrane as a helical segment. S-palmitoyl cysteine attachment occurs at residues Cys259 and Cys260. At 259-365 (CCRKKRREEK…PAQSKDGSIV (107 aa)) the chain is on the cytoplasmic side. Over residues 269–282 (YEKEVHHDIREDVP) the composition is skewed to basic and acidic residues. The disordered stretch occupies residues 269–343 (YEKEVHHDIR…TLPPAKVAAP (75 aa)). Over residues 286–322 (SRTSTARSYIGSNHSSLGSMSPSNMEGYSKTQYNQVP) the composition is skewed to polar residues. A phosphoserine mark is found at Ser297, Ser304, Ser306, Ser323, Ser332, and Ser363. A PDZ-binding motif is present at residues 360-365 (KDGSIV).

As to quaternary structure, monomer. May form homodimer. Interacts with LNX, MAGI1, DLG4, PRKCABP, TJP1 and CTNNB1. Interacts with MPDZ; recruits MPDZ to intercellular contact sites. Interacts with JAML (homodimeric form). Secreted isoform 3, isoform 4 and isoform 5 can interact with the extracellular domain of the receptor. In terms of assembly, (Microbial infection) Interacts with adenovirus subgroups A, C, D, E and F fiber proteins as well as coxsackievirus B1, B2, B3, B4, B5 and B6 capsid proteins. Post-translationally, N-glycosylated. Palmitoylated on Cys-259 and/or Cys-260; required for proper localization to the plasma membrane. As to expression, expressed in pancreas, brain, heart, small intestine, testis, prostate and at a lower level in liver and lung. Isoform 5 is ubiquitously expressed. Isoform 3 is expressed in heart, lung and pancreas. In skeletal muscle, isoform 1 is found at the neuromuscular junction and isoform 2 is found in blood vessels. In cardiac muscle, isoform 1 and isoform 2 are found at intercalated disks. In heart expressed in subendothelial layers of the vessel wall but not in the luminal endothelial surface. Expression is elevated in hearts with dilated cardiomyopathy.

It is found in the cell membrane. The protein localises to the basolateral cell membrane. Its subcellular location is the cell junction. It localises to the tight junction. The protein resides in the adherens junction. It is found in the secreted. Its function is as follows. Component of the epithelial apical junction complex that may function as a homophilic cell adhesion molecule and is essential for tight junction integrity. Also involved in transepithelial migration of leukocytes through adhesive interactions with JAML a transmembrane protein of the plasma membrane of leukocytes. The interaction between both receptors also mediates the activation of gamma-delta T-cells, a subpopulation of T-cells residing in epithelia and involved in tissue homeostasis and repair. Upon epithelial CXADR-binding, JAML induces downstream cell signaling events in gamma-delta T-cells through PI3-kinase and MAP kinases. It results in proliferation and production of cytokines and growth factors by T-cells that in turn stimulate epithelial tissues repair. In terms of biological role, (Microbial infection) Acts as a receptor for adenovirus type C. (Microbial infection) Acts as a receptor for Coxsackievirus B1 to B6. The protein is Coxsackievirus and adenovirus receptor (CXADR) of Homo sapiens (Human).